The chain runs to 193 residues: Oleosin S1-2 (193 aa).

Position 2 is an N-acetylalanine (alanine 2). The polar stretch occupies residues alanine 2–alanine 39. 3 helical membrane-spanning segments follow: residues valine 37 to threonine 57, isoleucine 66 to isoleucine 86, and glycine 87 to methionine 107. Residues valine 40–histidine 113 are hydrophobic. The disordered stretch occupies residues alanine 139–threonine 193. Residues arginine 142–threonine 193 are compositionally biased toward basic and acidic residues.

Belongs to the oleosin family.

It is found in the lipid droplet. The protein localises to the membrane. May have a structural role to stabilize the lipid body during desiccation of the seed by preventing coalescence of the oil. Probably interacts with both lipid and phospholipid moieties of lipid bodies. May also provide recognition signals for specific lipase anchorage in lipolysis during seedling growth. The polypeptide is Oleosin S1-2 (S1) (Brassica napus (Rape)).